Reading from the N-terminus, the 496-residue chain is Fascin (496 aa).

It belongs to the fascin family.

It localises to the cytoplasm. It is found in the cytoskeleton. In terms of biological role, acts as an actin bundling protein. The polypeptide is Fascin (Strongylocentrotus purpuratus (Purple sea urchin)).